The following is a 92-amino-acid chain: Small ribosomal subunit protein uS19 (92 aa).

This sequence belongs to the universal ribosomal protein uS19 family.

Protein S19 forms a complex with S13 that binds strongly to the 16S ribosomal RNA. The sequence is that of Small ribosomal subunit protein uS19 from Shewanella putrefaciens (strain CN-32 / ATCC BAA-453).